The sequence spans 445 residues: MASLPGIDEHTTSEELITGDNEWHKLVIPKGSDWQIDLKAEGKLIVKVNSGIVEIFGTELAVDDEYTFQNWKFPIYAVEETELLWKCPDLTTNTITVKPNHTMKYIYNLHFMLEKIRMSNFEGPRVVIVGGSQTGKTSLSRTLCSYALKFNAYQPLYINLDPQQPIFTVPGCISATPISDILDAQLPTWGQSLTSGATLLHNKQPMVKNFGLERINENKDLYLECISQLGQVVGQRLHLDPQVRRSGCIVDTPSISQLDENLAELHHIIEKLNVNIMLVLCSETDPLWEKVKKTFGPELGNNNIFFIPKLDGVSAVDDVYKRSLQRTSIREYFYGSLDTALSPYAIGVDYEDLTIWKPSNVFDNEVGRVELFPVTITPSNLQHAIIAITFAERRADQATVIKSPILGFALITEVNEKRRKLRVLLPVPGRLPSKAMILTSYRYLE.

Residues aspartate 33, lysine 72, and 133-138 (QTGKTS) contribute to the ATP site.

The protein belongs to the Clp1 family. Clp1 subfamily. As to quaternary structure, component of the cleavage factor IA (CF IA) complex, which is a heterohexameric complex with 2:2:1:1 stoichiometry of RNA14, RNA15, PCF11 and CLP1. It contains 2 copies of an RNA14-RNA15 dimer and 1 copy of CLP1-PCF11. The complex interacts with the cleavage factor HRB1/CF IB to form the cleavage factor I (CF I) complex, and binds to RNA. Interacts directly with PCF11. Interacts with the CPF components CFT1, PTA1, PFS2, YSH1 and SSU72.

The protein localises to the nucleus. Its function is as follows. Component of the cleavage factor IA (CF IA) complex, which is involved in the endonucleolytic cleavage during polyadenylation-dependent pre-mRNA 3'-end formation. Associates with HRB1/CF IB to form the cleavage factor I (CF I) complex. CF I is required for correct positioning of a larger protein complex, the cleavage and polyadenylation factor (CPF) complex, which contains the catalytic subunits executing mRNA cleavage and polyadenylation. CLP1 mediates interactions between CF IA and CPF factors. CLP1 is also involved in maintaining the CF IA interaction with the C-terminal domain of RNA Pol II largest subunit via PCF11, which links pre-mRNA 3'-end processing to transcription termination. In Saccharomyces cerevisiae (strain YJM789) (Baker's yeast), this protein is mRNA cleavage and polyadenylation factor CLP1.